Here is a 66-residue protein sequence, read N- to C-terminus: Cold shock protein CspC (66 aa).

Positions 4–63 constitute a CSD domain; that stretch reads GTVKWFNAEKGFGFIERENGDDVFVHFSAIQSDGFKSLDEGQKVSFDVEQGARGAQAANV.

The protein localises to the cytoplasm. In Bacillus subtilis (strain 168), this protein is Cold shock protein CspC (cspC).